The primary structure comprises 524 residues: Glutamyl-tRNA(Gln) amidotransferase subunit A (524 aa).

Catalysis depends on charge relay system residues K109 and S184. S208 functions as the Acyl-ester intermediate in the catalytic mechanism.

The protein belongs to the amidase family. GatA subfamily. As to quaternary structure, heterotrimer of A, B and C subunits.

It carries out the reaction L-glutamyl-tRNA(Gln) + L-glutamine + ATP + H2O = L-glutaminyl-tRNA(Gln) + L-glutamate + ADP + phosphate + H(+). Allows the formation of correctly charged Gln-tRNA(Gln) through the transamidation of misacylated Glu-tRNA(Gln) in organisms which lack glutaminyl-tRNA synthetase. The reaction takes place in the presence of glutamine and ATP through an activated gamma-phospho-Glu-tRNA(Gln). The protein is Glutamyl-tRNA(Gln) amidotransferase subunit A of Tropheryma whipplei (strain TW08/27) (Whipple's bacillus).